A 560-amino-acid polypeptide reads, in one-letter code: MRSDRIKKGFERAPHRSLLRATGLNDGDFEKPFIGIANSHIDIIPGHYYLQEYGRIAKDEIRKAGGVPFEFNTIGVDDGIAMGHEGMKYSLPSRELIADSIETVMNAHQLDALVCIPNCDKIVPGMLMGALRVNVPTVFVSGGPMKAGHLHDGTPIDLNTAFEAVGKRAQGQLTDAELYEIECQACPSGGSCSGMFTANSMNVLCEAMGVALPGNGTVLALTPEREALVRRAARRAVEIAADERFKLRNIANRDAIHNAMVVDMAMGGSSNTVLHMLAISREAGAPLSLRDIEEIAGKVAHIAKIAPSLATVHMEDIHRAGGVPAVLREAARRGGSVREGALTVTGETVGERIRDARTADPELIRPLENAYSPVGGLAVLFGNLAAEGAVVKTAGIQPSMRRFTGAAICFDSQDEAIAGIMGGKVKPGHFVVIRYEGPKGGPGMQEMLSPTSLIMGMGLGESVALVTDGRFSGATRGACVGHVSPEAAEGGVIGLVQDGDRITIDVEARALTVDVPDAELARRREGFRPKRRDPGSSWLRRYAHLVTNAANGAVLRSTDL.

Position 78 (aspartate 78) interacts with Mg(2+). A [2Fe-2S] cluster-binding site is contributed by cysteine 119. Residues aspartate 120 and lysine 121 each coordinate Mg(2+). Lysine 121 bears the N6-carboxylysine mark. Cysteine 192 provides a ligand contact to [2Fe-2S] cluster. Glutamate 446 is a binding site for Mg(2+). Serine 472 acts as the Proton acceptor in catalysis.

The protein belongs to the IlvD/Edd family. Homodimer. It depends on [2Fe-2S] cluster as a cofactor. Mg(2+) serves as cofactor.

It catalyses the reaction (2R)-2,3-dihydroxy-3-methylbutanoate = 3-methyl-2-oxobutanoate + H2O. The enzyme catalyses (2R,3R)-2,3-dihydroxy-3-methylpentanoate = (S)-3-methyl-2-oxopentanoate + H2O. The protein operates within amino-acid biosynthesis; L-isoleucine biosynthesis; L-isoleucine from 2-oxobutanoate: step 3/4. It functions in the pathway amino-acid biosynthesis; L-valine biosynthesis; L-valine from pyruvate: step 3/4. In terms of biological role, functions in the biosynthesis of branched-chain amino acids. Catalyzes the dehydration of (2R,3R)-2,3-dihydroxy-3-methylpentanoate (2,3-dihydroxy-3-methylvalerate) into 2-oxo-3-methylpentanoate (2-oxo-3-methylvalerate) and of (2R)-2,3-dihydroxy-3-methylbutanoate (2,3-dihydroxyisovalerate) into 2-oxo-3-methylbutanoate (2-oxoisovalerate), the penultimate precursor to L-isoleucine and L-valine, respectively. The chain is Dihydroxy-acid dehydratase from Anaeromyxobacter sp. (strain K).